Consider the following 156-residue polypeptide: Ribonuclease ageritin (156 aa).

The first 21 residues, 1-21 (MSESSTFTTAVVPEGEGVAPM), serve as a signal peptide directing secretion. H98 is an active-site residue. N-linked (GlcNAc...) asparagine glycosylation is found at N100 and N139.

Belongs to the ribotoxin-like family. As to quaternary structure, monomer. Requires Mg(2+) as cofactor.

The protein resides in the vacuole lumen. It catalyses the reaction a 28S rRNA containing guanosine-adenosine pair + H2O = an [RNA fragment]-3'-adenosine-3'-phosphate + a 5'-a hydroxy-guanosine-3'-[RNA fragment].. With respect to regulation, in contrast to most ribotoxins, activity is completely inhibited by EDTA. In terms of biological role, fungal ribonuclease involved in fungal defense. Highly specific and highly toxic fungal endonuclease that cleaves a single phosphodiester bond in the 28S RNA of eukaryotic ribosomes at a universally conserved GAGA tetraloop of the sarcin-ricin loop (SRL). The damage of the SRL inhibits the binding of translation elongation factors and halts protein biosynthesis, ultimately resulting in the death of the target cells. Shows antitumor activity. Exerts cytotoxicity and induces apoptosis towards rat glial cells and human glioma cells, and also displays some activity towards human neurolastoma cell lines. Shows a strong entomotoxicity against Aedes aegypti larvae, yet no nematotoxicity against nematodes. This Cyclocybe aegerita (Black poplar mushroom) protein is Ribonuclease ageritin.